The chain runs to 461 residues: Bifunctional protein HldE (461 aa).

The interval 1–312 (MLEFLSQQKP…IKSFNRVDFE (312 aa)) is ribokinase. ATP is bound at residue 191–194 (NKKE). Aspartate 259 is an active-site residue. Residues 334-461 (FTNGCFDIVH…KIIEKIKDKK (128 aa)) form a cytidylyltransferase region.

This sequence in the N-terminal section; belongs to the carbohydrate kinase PfkB family. The protein in the C-terminal section; belongs to the cytidylyltransferase family. In terms of assembly, homodimer.

It catalyses the reaction D-glycero-beta-D-manno-heptose 7-phosphate + ATP = D-glycero-beta-D-manno-heptose 1,7-bisphosphate + ADP + H(+). The enzyme catalyses D-glycero-beta-D-manno-heptose 1-phosphate + ATP + H(+) = ADP-D-glycero-beta-D-manno-heptose + diphosphate. It participates in nucleotide-sugar biosynthesis; ADP-L-glycero-beta-D-manno-heptose biosynthesis; ADP-L-glycero-beta-D-manno-heptose from D-glycero-beta-D-manno-heptose 7-phosphate: step 1/4. Its pathway is nucleotide-sugar biosynthesis; ADP-L-glycero-beta-D-manno-heptose biosynthesis; ADP-L-glycero-beta-D-manno-heptose from D-glycero-beta-D-manno-heptose 7-phosphate: step 3/4. Functionally, catalyzes the phosphorylation of D-glycero-D-manno-heptose 7-phosphate at the C-1 position to selectively form D-glycero-beta-D-manno-heptose-1,7-bisphosphate. Its function is as follows. Catalyzes the ADP transfer from ATP to D-glycero-beta-D-manno-heptose 1-phosphate, yielding ADP-D-glycero-beta-D-manno-heptose. The polypeptide is Bifunctional protein HldE (Campylobacter jejuni subsp. jejuni serotype O:6 (strain 81116 / NCTC 11828)).